The following is a 355-amino-acid chain: MVLCKLLTPYFLLSILSVGVFTATAAPSPSIQMTENTNQDHHEHAKRGGTCAFPNYDGMVAVQKGGSNGGWAMSPDQECSYGSWCPYACKPGQLMGQWDPSATTYSYPKCQNGGLYCDSNGNLQKPNSDKDYCYDGKGTVIAKNNANSGDVAFCQTVLPGNEAMLIPTLVGSGSKQTLAVPGTDYWASSASHYYVNAPGVSVEDACQWGSSANPQGNWAPFVAGSNMDDNQNTFVKIGWNPVYLESSCPFKNVKPSFGIRITCDDESQCEGLPCSIDPSSNGVNEVTSSGGGSSGAGGGNFCVVTARNGAKANIEVFDVGSGSSSKGKRELNPLDVITTTVTETKYKTVTVTAKT.

Residues 6–26 (LLTPYFLLSILSVGVFTATAA) traverse the membrane as a helical segment.

The protein belongs to the SUN family.

It is found in the membrane. This is an uncharacterized protein from Saccharomyces cerevisiae (strain ATCC 204508 / S288c) (Baker's yeast).